The following is a 380-amino-acid chain: Chaperone protein DnaJ (380 aa).

A J domain is found at 5–72 (DFYEVLGVAK…NKRAAYDQYG (68 aa)). A CR-type zinc finger spans residues 140-218 (GKDAQIRIPS…CGGQGKVKRQ (79 aa)). Zn(2+)-binding residues include Cys-153, Cys-156, Cys-170, Cys-173, Cys-192, Cys-195, Cys-206, and Cys-209. 4 CXXCXGXG motif repeats span residues 153 to 160 (CDTCHGSG), 170 to 177 (CTTCNGMG), 192 to 199 (CPHCRGTG), and 206 to 213 (CTSCGGQG). The interval 359–380 (KGGAKHSPSGESWTDRLKSFFS) is disordered. Positions 371–380 (WTDRLKSFFS) are enriched in basic and acidic residues.

It belongs to the DnaJ family. Homodimer. The cofactor is Zn(2+).

It localises to the cytoplasm. Its function is as follows. Participates actively in the response to hyperosmotic and heat shock by preventing the aggregation of stress-denatured proteins and by disaggregating proteins, also in an autonomous, DnaK-independent fashion. Unfolded proteins bind initially to DnaJ; upon interaction with the DnaJ-bound protein, DnaK hydrolyzes its bound ATP, resulting in the formation of a stable complex. GrpE releases ADP from DnaK; ATP binding to DnaK triggers the release of the substrate protein, thus completing the reaction cycle. Several rounds of ATP-dependent interactions between DnaJ, DnaK and GrpE are required for fully efficient folding. Also involved, together with DnaK and GrpE, in the DNA replication of plasmids through activation of initiation proteins. The chain is Chaperone protein DnaJ from Delftia acidovorans (strain DSM 14801 / SPH-1).